We begin with the raw amino-acid sequence, 130 residues long: Small ribosomal subunit protein uS9 (130 aa).

A disordered region spans residues 99-130 (KRAGLLTRDPRMKERKKPGLKAARRSPQFSKR). Positions 111–130 (KERKKPGLKAARRSPQFSKR) are enriched in basic residues.

This sequence belongs to the universal ribosomal protein uS9 family.

The protein is Small ribosomal subunit protein uS9 of Staphylococcus aureus (strain Mu3 / ATCC 700698).